Consider the following 363-residue polypeptide: Disease resistance protein RBA1 (363 aa).

One can recognise a TIR domain in the interval 12–175 (PVPKVFLSFR…EIVKEVERVL (164 aa)). Residues 21 to 26 (RGEEIR) and Gly53 contribute to the NAD(+) site. Glu86 is an active-site residue.

In terms of assembly, homooligomer; homooligomerization is required for activity.

It is found in the cytoplasm. The protein resides in the nucleus. Its subcellular location is the nucleoplasm. The enzyme catalyses NAD(+) + H2O = ADP-D-ribose + nicotinamide + H(+). It catalyses the reaction NADP(+) + H2O = ADP-D-ribose 2'-phosphate + nicotinamide + H(+). In terms of biological role, disease resistance (R) protein that specifically recognizes the HopBA1 type III effector protein from P.syringae, and triggers cell death. Acts as a NAD(+) hydrolase (NADase): in response to pathogen-recognition, catalyzes cleavage of NAD(+) into ADP-D-ribose (ADPR) and nicotinamide; NAD(+) cleavage triggering a defense system that promotes cell death. In addition to ADPR, also generates a cyclization variant of cyclic ADPR (cADPR), termed v-cADPR, for which the cyclizing bond is unknown. Also able to hydrolyze NADP(+), but not other NAD(+)-related molecules. This chain is Disease resistance protein RBA1, found in Arabidopsis thaliana (Mouse-ear cress).